The sequence spans 319 residues: Transcription factor STKL2 (319 aa).

The segment at 1–119 is disordered; sequence MAPLESPATA…NKKANPQRVW (119 aa). Residues 21–34 show a composition bias toward basic and acidic residues; sequence EIFKSSSEESKPKD. Polar residues predominate over residues 38-55; sequence VPSSKTLKSPSAAVNSKT. The segment covering 89–112 has biased composition (basic and acidic residues); that stretch reads RAGEGSTSRDMHVKRVKKEDDNKK.

Belongs to the GeBP family. Expressed strongly in leaves and flowers, weakly in roots, and very weakly in stems.

The protein localises to the nucleus. In terms of biological role, transcription repressor that binds DNA in a sequence-specific manner, 5'-GCCT-3', to regulate the expression of PGR. Acts as a modulatory component for the glucose-triggered developmental leaf growth process. The sequence is that of Transcription factor STKL2 from Arabidopsis thaliana (Mouse-ear cress).